Consider the following 525-residue polypeptide: Probable histidine ammonia-lyase (525 aa).

Residues 145–147 (ASG) constitute a cross-link (5-imidazolinone (Ala-Gly)). Position 146 is a 2,3-didehydroalanine (Ser) (Ser-146).

It belongs to the PAL/histidase family. In terms of processing, contains an active site 4-methylidene-imidazol-5-one (MIO), which is formed autocatalytically by cyclization and dehydration of residues Ala-Ser-Gly.

The protein resides in the cytoplasm. It carries out the reaction L-histidine = trans-urocanate + NH4(+). Its pathway is amino-acid degradation; L-histidine degradation into L-glutamate; N-formimidoyl-L-glutamate from L-histidine: step 1/3. In Halobacterium salinarum (strain ATCC 29341 / DSM 671 / R1), this protein is Probable histidine ammonia-lyase.